We begin with the raw amino-acid sequence, 28 residues long: Dermaseptin-1 (28 aa).

A Glutamine amide modification is found at Gln28.

In terms of tissue distribution, expressed by the skin glands.

The protein resides in the secreted. In terms of biological role, has antimicrobial activity. The chain is Dermaseptin-1 from Phyllomedusa tomopterna (Tiger-striped leaf frog).